The following is a 375-amino-acid chain: Actin, cytoplasmic (375 aa).

It belongs to the actin family.

It localises to the cytoplasm. Its subcellular location is the cytoskeleton. The catalysed reaction is ATP + H2O = ADP + phosphate + H(+). In terms of biological role, actins are highly conserved proteins that are involved in various types of cell motility and are ubiquitously expressed in all eukaryotic cells. This Oxytricha trifallax (Sterkiella histriomuscorum) protein is Actin, cytoplasmic.